The sequence spans 482 residues: UDP-glycosyltransferase 1 (482 aa).

N-linked (GlcNAc...) asparagine glycosylation occurs at Asn243. The helical transmembrane segment at 450–470 threads the bilayer; it reads IYLVYALVLGSAWWIGKTILG.

The protein belongs to the glycosyltransferase 28 family.

Its subcellular location is the membrane. It catalyses the reaction exophillate aglycone + UDP-alpha-D-glucose = exophillate + UDP + H(+). The protein operates within secondary metabolite biosynthesis. Its function is as follows. Acts as a depside 2-O-glucosyltransferase that catalyzes the first glycosylation step during phaeomoniecin D biosynthesis by producing the intermediate exophillic acid which is further O-galactosylated into phaeomoniecin D by the C-galactosyltransferase OGT2. This Phaeomoniella chlamydospora (Phaeoacremonium chlamydosporum) protein is UDP-glycosyltransferase 1.